Reading from the N-terminus, the 172-residue chain is Biogenesis of lysosome-related organelles complex 1 subunit 6 (172 aa).

2 disordered regions span residues 1–36 (MSVP…SPDE) and 135–172 (RALK…AKRT). A coiled-coil region spans residues 125 to 167 (LHEKTSKLKKRALKLQQKRQKEELEREQQREKEFEREKQLTAK). A compositionally biased stretch (basic and acidic residues) spans 143–164 (RQKEELEREQQREKEFEREKQL).

The protein belongs to the BLOC1S6 family. In terms of assembly, homodimer. Octamer composed of one copy each BLOC1S1, BLOC1S2, BLOC1S3, BLOC1S4, BLOC1S5, BLOC1S6, DTNBP1/BLOC1S7 and SNAPIN/BLOC1S8. The BLOC-1 complex associates with the AP-3 protein complex and membrane protein cargos. Interacts with BLOC1S4, BLOC1S5, DTNBP1/BLOC1S7, F-actin. Component of the biogenesis of lysosome-related organelles complex 1 (BLOC-1) composed of BLOC1S1, BLOC1S2, BLOC1S3, BLOC1S4, BLOC1S5, BLOC1S6, DTNBP1/BLOC1S7 and SNAPIN/BLOC1S8. Interacts with SNAP25, SNAP47 and STX12.

The protein localises to the cytoplasm. It localises to the membrane. Functionally, component of the BLOC-1 complex, a complex that is required for normal biogenesis of lysosome-related organelles (LRO), such as platelet dense granules and melanosomes. In concert with the AP-3 complex, the BLOC-1 complex is required to target membrane protein cargos into vesicles assembled at cell bodies for delivery into neurites and nerve terminals. The BLOC-1 complex, in association with SNARE proteins, is also proposed to be involved in neurite extension. May play a role in intracellular vesicle trafficking, particularly in the vesicle-docking and fusion process. The polypeptide is Biogenesis of lysosome-related organelles complex 1 subunit 6 (BLOC1S6) (Bos taurus (Bovine)).